The primary structure comprises 146 residues: Ribonuclease H (146 aa).

The region spanning 1-136 (MKHIEIYTDG…CDTLAREAAL (136 aa)) is the RNase H type-1 domain. Residues Asp-9, Glu-47, Asp-69, and Asp-128 each contribute to the Mg(2+) site.

It belongs to the RNase H family. As to quaternary structure, monomer. Mg(2+) is required as a cofactor.

It localises to the cytoplasm. It carries out the reaction Endonucleolytic cleavage to 5'-phosphomonoester.. Its function is as follows. Endonuclease that specifically degrades the RNA of RNA-DNA hybrids. This chain is Ribonuclease H, found in Campylobacter jejuni subsp. jejuni serotype O:23/36 (strain 81-176).